A 279-amino-acid polypeptide reads, in one-letter code: Probable endonuclease 4 (279 aa).

Histidine 69, histidine 109, glutamate 145, aspartate 179, histidine 182, histidine 216, aspartate 229, histidine 231, and glutamate 261 together coordinate Zn(2+).

The protein belongs to the AP endonuclease 2 family. It depends on Zn(2+) as a cofactor.

The catalysed reaction is Endonucleolytic cleavage to 5'-phosphooligonucleotide end-products.. In terms of biological role, endonuclease IV plays a role in DNA repair. It cleaves phosphodiester bonds at apurinic or apyrimidinic (AP) sites, generating a 3'-hydroxyl group and a 5'-terminal sugar phosphate. This is Probable endonuclease 4 from Serratia proteamaculans (strain 568).